A 417-amino-acid chain; its full sequence is Actin-related protein 10 (417 aa).

Belongs to the actin family. As to quaternary structure, subunit of dynactin, a multiprotein complex part of a tripartite complex with dynein and a adapter, such as BICDL1, BICD2 or HOOK3. The dynactin complex is built around ACTR1A/ACTB filament and consists of an actin-related filament composed of a shoulder domain, a pointed end and a barbed end. Its length is defined by its flexible shoulder domain. The soulder is composed of 2 DCTN1 subunits, 4 DCTN2 and 2 DCTN3. The 4 DCNT2 (via N-terminus) bind the ACTR1A filament and act as molecular rulers to determine the length. The pointed end is important for binding dynein-dynactin cargo adapters. Consists of 4 subunits: ACTR10, DCNT4, DCTN5 and DCTN6. The barbed end is composed of a CAPZA1:CAPZB heterodimers, which binds ACTR1A/ACTB filament and dynactin and stabilizes dynactin.

Its subcellular location is the cytoplasm. It localises to the cytoskeleton. Functionally, part of the dynactin complex that activates the molecular motor dynein for ultra-processive transport along microtubules. This chain is Actin-related protein 10 (Actr10), found in Mus musculus (Mouse).